We begin with the raw amino-acid sequence, 966 residues long: RNA polymerase-associated protein RapA (966 aa).

One can recognise a Helicase ATP-binding domain in the interval 163-337; the sequence is EVGRRIAPRV…FARLHLLDPN (175 aa). 176-183 lines the ATP pocket; the sequence is DEVGLGKT. The DEAH box signature appears at 283–286; sequence DEAH. Residues 489-643 enclose the Helicase C-terminal domain; sequence RVDWLINLVK…TCPMGAILHE (155 aa).

This sequence belongs to the SNF2/RAD54 helicase family. RapA subfamily. Interacts with the RNAP. Has a higher affinity for the core RNAP than for the holoenzyme. Its ATPase activity is stimulated by binding to RNAP.

Its function is as follows. Transcription regulator that activates transcription by stimulating RNA polymerase (RNAP) recycling in case of stress conditions such as supercoiled DNA or high salt concentrations. Probably acts by releasing the RNAP, when it is trapped or immobilized on tightly supercoiled DNA. Does not activate transcription on linear DNA. Probably not involved in DNA repair. In Histophilus somni (strain 129Pt) (Haemophilus somnus), this protein is RNA polymerase-associated protein RapA.